A 348-amino-acid chain; its full sequence is Histidinol-phosphate aminotransferase (348 aa).

At K210 the chain carries N6-(pyridoxal phosphate)lysine.

This sequence belongs to the class-II pyridoxal-phosphate-dependent aminotransferase family. Histidinol-phosphate aminotransferase subfamily. Homodimer. Requires pyridoxal 5'-phosphate as cofactor.

It carries out the reaction L-histidinol phosphate + 2-oxoglutarate = 3-(imidazol-4-yl)-2-oxopropyl phosphate + L-glutamate. It participates in amino-acid biosynthesis; L-histidine biosynthesis; L-histidine from 5-phospho-alpha-D-ribose 1-diphosphate: step 7/9. In Pseudomonas putida (strain ATCC 700007 / DSM 6899 / JCM 31910 / BCRC 17059 / LMG 24140 / F1), this protein is Histidinol-phosphate aminotransferase.